A 189-amino-acid chain; its full sequence is MSGACSSYVSAEQEVVRGFSCPLPGGEAAAVFCCGFRDHKYCCDDPHSFFPYEHNYMWWLSIGALVGLSTAAVVLLAFLITACVLCYLFISSKPQTKLDPGLSLQTTGSKEMSPDHHGLNTAIPMEVPGVSSPRQSSSSNTHLESNKKQTVSPTCLPQNQFMATVTASNIPGSPDEISVPTPGPHGPVP.

Helical transmembrane passes span 48–68 (SFFPYEHNYMWWLSIGALVGL) and 70–90 (TAAVVLLAFLITACVLCYLFI). The interval 98–189 (LDPGLSLQTT…PTPGPHGPVP (92 aa)) is disordered. Over residues 140–171 (NTHLESNKKQTVSPTCLPQNQFMATVTASNIP) the composition is skewed to polar residues.

Belongs to the shisa family.

It is found in the membrane. The protein is Protein shisa-like-2A (Shisal2a) of Mus musculus (Mouse).